A 901-amino-acid chain; its full sequence is Aconitate hydratase A (901 aa).

[4Fe-4S] cluster-binding residues include C443, C509, and C512.

It belongs to the aconitase/IPM isomerase family. In terms of assembly, monomer. Requires [4Fe-4S] cluster as cofactor.

It catalyses the reaction citrate = D-threo-isocitrate. It carries out the reaction (2S,3R)-3-hydroxybutane-1,2,3-tricarboxylate = 2-methyl-cis-aconitate + H2O. Its pathway is carbohydrate metabolism; tricarboxylic acid cycle; isocitrate from oxaloacetate: step 2/2. It functions in the pathway organic acid metabolism; propanoate degradation. Its function is as follows. Involved in the catabolism of short chain fatty acids (SCFA) via the tricarboxylic acid (TCA)(acetyl degradation route) and probably the 2-methylcitrate cycle I (propionate degradation route). Catalyzes the reversible isomerization of citrate to isocitrate via cis-aconitate. Could catalyze the hydration of 2-methyl-cis-aconitate to yield (2R,3S)-2-methylisocitrate. The apo form of AcnA functions as a RNA-binding regulatory protein. The chain is Aconitate hydratase A (acnA) from Staphylococcus aureus (strain COL).